The following is a 355-amino-acid chain: Protein ATP1B4 (355 aa).

The Nuclear segment spans residues 1 to 108 (MRRQLRSRRA…SLARTGQSLS (108 aa)). The segment at 35–76 (EEEEAEEARVMVVPDLEEEEKEEEEEKEEDEKEEEESHHQDT) is disordered. Residues 49-68 (DLEEEEKEEEEEKEEDEKEE) show a composition bias toward acidic residues. A helical; Signal-anchor for type II membrane protein membrane pass occupies residues 109-129 (LLLVIYFFFYASLAAVITLCM). Over 130-355 (YTLFLTISPY…RVIFTLNIET (226 aa)) the chain is Perinuclear space.

The protein belongs to the X(+)/potassium ATPases subunit beta family. As to quaternary structure, associates with a SMAD7-transcriptional complex. Interacts with SNW1 and TOR1AIP1. Does not associate with known Na,K-ATPase alpha-subunits. In terms of tissue distribution, expressed in skeletal muscle (at protein level). Expressed during postnatal development in skeletal muscle and heart.

It localises to the nucleus inner membrane. Its function is as follows. May act as a transcriptional coregulator during muscle development through its interaction with SNW1. Has lost its ancestral function as a Na,K-ATPase beta-subunit. The polypeptide is Protein ATP1B4 (ATP1B4) (Sus scrofa (Pig)).